A 1012-amino-acid chain; its full sequence is Tolloid-like protein 2 (1012 aa).

Residues M1–G21 form the signal peptide. Residues A22–R146 constitute a propeptide that is removed on maturation. Residues K83–T135 form a disordered region. Positions F126–T135 are enriched in polar residues. The Peptidase M12A domain maps to R146–P346. The N-linked (GlcNAc...) asparagine glycan is linked to N168. 4 cysteine pairs are disulfide-bonded: C189-C345, C209-C231, C211-C212, and C348-C374. H239 is a binding site for Zn(2+). Residue E240 is part of the active site. 2 residues coordinate Zn(2+): H243 and H249. 2 consecutive CUB domains span residues C348–M460 and C461–E573. N-linked (GlcNAc...) asparagine glycosylation is found at N358 and N389. Intrachain disulfides connect C401-C423, C461-C487, C514-C536, C577-C589, C585-C598, C600-C613, C617-C643, C670-C692, C733-C744, C740-C753, C755-C768, and C773-C799. Positions E573–E614 constitute an EGF-like 1; calcium-binding domain. The 113-residue stretch at C617–D729 folds into the CUB 3 domain. A glycan (N-linked (GlcNAc...) asparagine) is linked at N625. The EGF-like 2; calcium-binding domain maps to D729 to K769. CUB domains lie at C773–E885 and C886–T1002. N-linked (GlcNAc...) asparagine glycosylation is present at N802. 3 disulfides stabilise this stretch: C826-C848, C886-C916, and C943-C965. 2 positions are modified to omega-N-methylarginine: R960 and R963.

Zn(2+) serves as cofactor.

The protein localises to the secreted. In terms of biological role, protease which specifically processes pro-lysyl oxidase. Required for the embryonic development. Predominant protease, which in the development, influences dorsal-ventral patterning and skeletogenesis. The polypeptide is Tolloid-like protein 2 (Tll2) (Mus musculus (Mouse)).